The primary structure comprises 184 residues: Endoribonuclease YbeY (184 aa).

Positions 146, 150, and 156 each coordinate Zn(2+).

This sequence belongs to the endoribonuclease YbeY family. The cofactor is Zn(2+).

The protein resides in the cytoplasm. Single strand-specific metallo-endoribonuclease involved in late-stage 70S ribosome quality control and in maturation of the 3' terminus of the 16S rRNA. This is Endoribonuclease YbeY from Nostoc sp. (strain PCC 7120 / SAG 25.82 / UTEX 2576).